We begin with the raw amino-acid sequence, 140 residues long: Protein BIC1 (140 aa).

Residues 1-10 show a composition bias toward polar residues; sequence MMNIDDTTSP. Residues 1–71 form a disordered region; that stretch reads MMNIDDTTSP…RVDTGRERLK (71 aa). The span at 42-68 shows a compositional bias: basic and acidic residues; the sequence is ADKKDLALLEEKPKQSQEEDRVDTGRE.

Interacts with CRY2 in both darkness and light.

Its subcellular location is the nucleus. Regulates the blue-light dependent dimerization of CRY2 and formation of photobodies. Interacts with photoexited CRY2 to inhibit its activity. Inhibits CRY phosphorylation. The protein is Protein BIC1 of Arabidopsis thaliana (Mouse-ear cress).